Consider the following 217-residue polypeptide: FGFR1 oncogene partner 2 homolog (217 aa).

Coiled-coil stretches lie at residues 6-106 (TIEK…MSKY) and 163-188 (KEQE…TRES). Residues 194 to 217 (KEDASESTSLSGLVTSSDLSLRKS) are disordered. The span at 199 to 217 (ESTSLSGLVTSSDLSLRKS) shows a compositional bias: polar residues.

This sequence belongs to the SIKE family.

Its subcellular location is the cytoplasm. This Gallus gallus (Chicken) protein is FGFR1 oncogene partner 2 homolog (FGFR1OP2).